We begin with the raw amino-acid sequence, 1023 residues long: Probable beta-glucosidase E (1023 aa).

The segment at 1-51 is disordered; sequence MPKSYTPVHDSIPEEDHFSSDDESNFRLHRIDRSASRSQSPKENEGEPSIL. The Cytoplasmic segment spans residues 1 to 128; sequence MPKSYTPVHD…AVYYSKTWWR (128 aa). A compositionally biased stretch (basic and acidic residues) spans 11-45; that stretch reads SIPEEDHFSSDDESNFRLHRIDRSASRSQSPKENE. The chain crosses the membrane as a helical; Signal-anchor for type II membrane protein span at residues 129 to 149; sequence TLVVVIIALGLLVWGFLKYAS. Residues 150–1023 lie on the Extracellular side of the membrane; it reads TRGDIWEEYD…NLPLGKPFDP (874 aa). Asn-199 and Asn-387 each carry an N-linked (GlcNAc...) asparagine glycan. Asp-415 is an active-site residue. N-linked (GlcNAc...) asparagine glycosylation is found at Asn-458 and Asn-497. 2 disordered regions span residues 485-515 and 822-841; these read WESP…GSPG and NPSR…PSYD. Residues 827 to 838 are compositionally biased toward low complexity; the sequence is PAARPPDAVAPP. Asn-848 carries an N-linked (GlcNAc...) asparagine glycan. The segment at 873–909 is disordered; that stretch reads ATTPPPPNPEASGSATDQKPHRTKPSDAGGGAGGNPS. Asn-964 and Asn-979 each carry an N-linked (GlcNAc...) asparagine glycan.

It belongs to the glycosyl hydrolase 3 family.

The protein resides in the cell membrane. It carries out the reaction Hydrolysis of terminal, non-reducing beta-D-glucosyl residues with release of beta-D-glucose.. It participates in glycan metabolism; cellulose degradation. In terms of biological role, beta-glucosidases are one of a number of cellulolytic enzymes involved in the degradation of cellulosic biomass. Catalyzes the last step releasing glucose from the inhibitory cellobiose. The protein is Probable beta-glucosidase E (bglE) of Emericella nidulans (strain FGSC A4 / ATCC 38163 / CBS 112.46 / NRRL 194 / M139) (Aspergillus nidulans).